A 223-amino-acid chain; its full sequence is MEVKIEESWKEMLKGEFCKSYFKRLVNFIKNEYKTKKDKIFPSPKLIFNAFDSLPFKDIKIVILGQDPYHGKGQANGLAFSVNSDIKIPPSLQNIFKEIERSLKIKTIPNGDLTRWATQGVFLLNSILTVEEGRPSSHKDIGWEIFTNEVIKIISKNLNNVVFMLWGNFARGKKELIDASKHLILETSHPSPYSAHNGFLGSNHFSQTLKYLKEHNKISIDFQ.

Residue aspartate 67 is the Proton acceptor of the active site.

It belongs to the uracil-DNA glycosylase (UDG) superfamily. UNG family.

It localises to the cytoplasm. The enzyme catalyses Hydrolyzes single-stranded DNA or mismatched double-stranded DNA and polynucleotides, releasing free uracil.. In terms of biological role, excises uracil residues from the DNA which can arise as a result of misincorporation of dUMP residues by DNA polymerase or due to deamination of cytosine. The polypeptide is Uracil-DNA glycosylase (Borrelia turicatae (strain 91E135)).